The sequence spans 366 residues: tRNA(Met) cytidine acetate ligase (366 aa).

ATP-binding positions include 7–20 (IAEFNPFHNGHKYL), glycine 96, asparagine 152, and arginine 175.

Belongs to the TmcAL family.

The protein resides in the cytoplasm. The enzyme catalyses cytidine(34) in elongator tRNA(Met) + acetate + ATP = N(4)-acetylcytidine(34) in elongator tRNA(Met) + AMP + diphosphate. Catalyzes the formation of N(4)-acetylcytidine (ac(4)C) at the wobble position of elongator tRNA(Met), using acetate and ATP as substrates. First activates an acetate ion to form acetyladenylate (Ac-AMP) and then transfers the acetyl group to tRNA to form ac(4)C34. This Streptococcus mutans serotype c (strain ATCC 700610 / UA159) protein is tRNA(Met) cytidine acetate ligase.